Consider the following 101-residue polypeptide: NADH-quinone oxidoreductase subunit K (101 aa).

The next 3 membrane-spanning stretches (helical) occupy residues 4–24 (VGHY…GIFI), 29–49 (IIVI…NLVA), and 65–85 (FVLT…VIYF).

This sequence belongs to the complex I subunit 4L family. In terms of assembly, NDH-1 is composed of 14 different subunits. Subunits NuoA, H, J, K, L, M, N constitute the membrane sector of the complex.

The protein resides in the cell inner membrane. It carries out the reaction a quinone + NADH + 5 H(+)(in) = a quinol + NAD(+) + 4 H(+)(out). Functionally, NDH-1 shuttles electrons from NADH, via FMN and iron-sulfur (Fe-S) centers, to quinones in the respiratory chain. The immediate electron acceptor for the enzyme in this species is believed to be ubiquinone. Couples the redox reaction to proton translocation (for every two electrons transferred, four hydrogen ions are translocated across the cytoplasmic membrane), and thus conserves the redox energy in a proton gradient. This Sphingopyxis alaskensis (strain DSM 13593 / LMG 18877 / RB2256) (Sphingomonas alaskensis) protein is NADH-quinone oxidoreductase subunit K.